The primary structure comprises 677 residues: uncharacterized protein (677 aa).

The disordered stretch occupies residues 1-87 (MGRHSKPDPE…PTGAEPIAAA (87 aa)). The segment covering 17-29 (SDGHAAEQQHWED) has biased composition (basic and acidic residues). Positions 51-64 (GHYSAVGGYSASGS) are enriched in low complexity. The next 4 membrane-spanning stretches (helical) occupy residues 115–135 (VSIG…GVIL), 192–212 (VAVA…IGKW), 313–333 (EAVA…IGAV), and 474–494 (ATLA…IMLD).

Its subcellular location is the cell membrane. This is an uncharacterized protein from Mycobacterium tuberculosis (strain CDC 1551 / Oshkosh).